Consider the following 172-residue polypeptide: Thioredoxin M-type, chloroplastic (172 aa).

The transit peptide at 1-60 directs the protein to the chloroplast; sequence MALESLFKSIHTKTSLSSSIVFIFKGKACLLTSKSRIQESFAELNSFTSLVLLIENHVLL. Residues 61–172 form the Thioredoxin domain; that stretch reads HAREAVNEVQ…TLSEKVEKYI (112 aa). Catalysis depends on nucleophile residues C97 and C100. C97 and C100 are disulfide-bonded.

This sequence belongs to the thioredoxin family. Plant M-type subfamily. In terms of assembly, forms a complex with heterodimeric ferredoxin-thioredoxin reductase (FTR) and ferredoxin.

It is found in the plastid. The protein resides in the chloroplast. Functionally, participates in various redox reactions through the reversible oxidation of the active center dithiol to a disulfide. The M form is known to activate NADP-malate dehydrogenase. This Pisum sativum (Garden pea) protein is Thioredoxin M-type, chloroplastic.